Here is a 245-residue protein sequence, read N- to C-terminus: 7-cyano-7-deazaguanine synthase (245 aa).

An ATP-binding site is contributed by 19–29 (FSGGQDSATCL). Residues C207, C222, C225, and C228 each coordinate Zn(2+).

Belongs to the QueC family. Requires Zn(2+) as cofactor.

It catalyses the reaction 7-carboxy-7-deazaguanine + NH4(+) + ATP = 7-cyano-7-deazaguanine + ADP + phosphate + H2O + H(+). The protein operates within purine metabolism; 7-cyano-7-deazaguanine biosynthesis. Its function is as follows. Catalyzes the ATP-dependent conversion of 7-carboxy-7-deazaguanine (CDG) to 7-cyano-7-deazaguanine (preQ(0)). The chain is 7-cyano-7-deazaguanine synthase from Gluconacetobacter diazotrophicus (strain ATCC 49037 / DSM 5601 / CCUG 37298 / CIP 103539 / LMG 7603 / PAl5).